The following is a 96-amino-acid chain: Co-chaperonin GroES (96 aa).

The protein belongs to the GroES chaperonin family. Heptamer of 7 subunits arranged in a ring. Interacts with the chaperonin GroEL.

The protein resides in the cytoplasm. Its function is as follows. Together with the chaperonin GroEL, plays an essential role in assisting protein folding. The GroEL-GroES system forms a nano-cage that allows encapsulation of the non-native substrate proteins and provides a physical environment optimized to promote and accelerate protein folding. GroES binds to the apical surface of the GroEL ring, thereby capping the opening of the GroEL channel. The protein is Co-chaperonin GroES of Buchnera aphidicola subsp. Schizaphis graminum (strain Sg).